We begin with the raw amino-acid sequence, 1086 residues long: Fused isobutyryl-CoA mutase (1086 aa).

A B12-binding domain is found at 10-140; sequence HVRFVTASSL…QGMINVMLEE (131 aa). Residue His-23 participates in adenosylcob(III)alamin binding. Positions 153–407 are GTPase chaperone MeaI; it reads LERLPSGDVQ…FVALVDTINK (255 aa). A GTP-binding site is contributed by 210 to 215; that stretch reads GAGKSS. 4 residues coordinate Mg(2+): Ser-214, Val-238, Asp-239, and Asp-252. A GTP-binding site is contributed by Arg-255. 2 residues coordinate Mg(2+): Glu-300 and Thr-301. Position 347 to 350 (347 to 350) interacts with GTP; it reads NKFE. Residues 408-570 are linker; the sequence is KAGTNWKTSL…YKENVPGSFP (163 aa). Residues Phe-578, Arg-613, Arg-719, Tyr-763, Ser-812, Arg-847, and Lys-852 each coordinate substrate. Residues Glu-964 and Asn-1085 each contribute to the GTP site.

This sequence belongs to the IcmF family. In terms of assembly, homodimer. It depends on adenosylcob(III)alamin as a cofactor. Mg(2+) is required as a cofactor.

It catalyses the reaction 2-methylpropanoyl-CoA = butanoyl-CoA. It carries out the reaction 3-methylbutanoyl-CoA = 2,2-dimethylpropanoyl-CoA. The catalysed reaction is GTP + H2O = GDP + phosphate + H(+). In terms of biological role, catalyzes the reversible interconversion of isobutyryl-CoA and n-butyryl-CoA, and to a lesser extent, of pivalyl-CoA and isovaleryl-CoA, using radical chemistry. Also exhibits GTPase activity, associated with its G-protein domain (MeaI) that functions as a chaperone that assists cofactor delivery and proper holo-enzyme assembly. Also displays ATPase activity. Is not able to convert 3-hydroxybutyryl-CoA to 2-hydroxyisobutyryl-CoA. Does not exhibit methylmalonyl-CoA mutase (MCM) activity. The sequence is that of Fused isobutyryl-CoA mutase from Geobacillus kaustophilus (strain HTA426).